We begin with the raw amino-acid sequence, 475 residues long: Ribulose bisphosphate carboxylase large chain (475 aa).

N123 and T173 together coordinate substrate. K175 acts as the Proton acceptor in catalysis. K177 contributes to the substrate binding site. Mg(2+)-binding residues include K201, D203, and E204. K201 carries the N6-carboxylysine modification. The active-site Proton acceptor is the H294. 3 residues coordinate substrate: R295, H327, and S379.

It belongs to the RuBisCO large chain family. Type I subfamily. Heterohexadecamer of 8 large chains and 8 small chains. Mg(2+) is required as a cofactor.

It is found in the plastid. It localises to the chloroplast. It catalyses the reaction 2 (2R)-3-phosphoglycerate + 2 H(+) = D-ribulose 1,5-bisphosphate + CO2 + H2O. It carries out the reaction D-ribulose 1,5-bisphosphate + O2 = 2-phosphoglycolate + (2R)-3-phosphoglycerate + 2 H(+). Its function is as follows. RuBisCO catalyzes two reactions: the carboxylation of D-ribulose 1,5-bisphosphate, the primary event in carbon dioxide fixation, as well as the oxidative fragmentation of the pentose substrate in the photorespiration process. Both reactions occur simultaneously and in competition at the same active site. This Bigelowiella natans (Pedinomonas minutissima) protein is Ribulose bisphosphate carboxylase large chain.